Reading from the N-terminus, the 534-residue chain is N-acetylglutamate synthase, mitochondrial (534 aa).

The transit peptide at 1-18 (MATALMAVVLRAAAVAPR) directs the protein to the mitochondrion. The interval 19 to 99 (LRGRGGTGGA…HESPEPPSGR (81 aa)) is disordered. Residues 19–376 (LRGRGGTGGA…SGTLFKNAER (358 aa)) form an amino-acid kinase domain (AAK) region. Pro residues predominate over residues 81 to 96 (VPSPRPPVPHESPEPP). In terms of domain architecture, N-acetyltransferase spans 375–526 (ERMLRVRSLD…HAKGLPDSFH (152 aa)). Residues Lys401, Lys444, and 474–479 (RSRVTN) contribute to the substrate site.

Belongs to the acetyltransferase family. In terms of assembly, homodimer. Homotetramer. Post-translationally, probably processed by mitochondrial processing peptidase (MPP). The long form has not yet been isolated. Highly expressed in the adult liver, kidney and small intestine. Weakly expressed in the fetal liver, lung, pancreas, placenta, heart and brain tissue.

Its subcellular location is the mitochondrion matrix. The catalysed reaction is L-glutamate + acetyl-CoA = N-acetyl-L-glutamate + CoA + H(+). It participates in amino-acid biosynthesis; L-arginine biosynthesis; N(2)-acetyl-L-ornithine from L-glutamate: step 1/4. Its activity is regulated as follows. Increased by L-arginine. Its function is as follows. Plays a role in the regulation of ureagenesis by producing the essential cofactor N-acetylglutamate (NAG), thus modulating carbamoylphosphate synthase I (CPS1) activity. This chain is N-acetylglutamate synthase, mitochondrial (NAGS), found in Homo sapiens (Human).